The following is a 146-amino-acid chain: Phospholipase A2 (146 aa).

An N-terminal signal peptide occupies residues 1–18 (MAFLVFAFLTLMAVETYG). 7 cysteine pairs are disulfide-bonded: Cys44/Cys137, Cys46/Cys62, Cys61/Cys117, Cys67/Cys144, Cys68/Cys110, Cys77/Cys103, and Cys95/Cys108. Tyr45, Gly47, and Gly49 together coordinate Ca(2+). His65 is a catalytic residue. Position 66 (Asp66) interacts with Ca(2+). N-linked (GlcNAc...) asparagine glycosylation occurs at Asn85. The active site involves Asp111. A glycan (N-linked (GlcNAc...) asparagine) is linked at Asn126.

It depends on Ca(2+) as a cofactor. In terms of processing, N-glycosylated. Glycosylated with mannose chains including Man2(GlcNAc), Man2(GlcNAc)2, Man2(GlcNAc)3, Man2(GlcNAc)4 and Man2(GlcNAc)5. Expressed by the skin glands (at protein level).

The protein resides in the secreted. It carries out the reaction a 1,2-diacyl-sn-glycero-3-phosphocholine + H2O = a 1-acyl-sn-glycero-3-phosphocholine + a fatty acid + H(+). Functionally, PLA2 catalyzes the calcium-dependent hydrolysis of the 2-acyl groups in 3-sn-phosphoglycerides. This Pithecopus azureus (Orange-legged monkey tree frog) protein is Phospholipase A2.